We begin with the raw amino-acid sequence, 78 residues long: Large ribosomal subunit protein bL28 (78 aa).

Residues 1–27 are disordered; sequence MSAYCQVTGRKPSFGKSVSHSHRRTNR.

The protein belongs to the bacterial ribosomal protein bL28 family.

The chain is Large ribosomal subunit protein bL28 from Corynebacterium kroppenstedtii (strain DSM 44385 / JCM 11950 / CIP 105744 / CCUG 35717).